An 84-amino-acid polypeptide reads, in one-letter code: MRSSSKIKIDPSQHELVPKHEVLSIEEAYKILKELGIKPEQLPWIRASDPIAKLVGAKPGDIIKITRKSSLSGEVVVYRYVISG.

It belongs to the archaeal Rpo5/eukaryotic RPB5 RNA polymerase subunit family. As to quaternary structure, part of the RNA polymerase complex.

It localises to the cytoplasm. It carries out the reaction RNA(n) + a ribonucleoside 5'-triphosphate = RNA(n+1) + diphosphate. Its function is as follows. DNA-dependent RNA polymerase (RNAP) catalyzes the transcription of DNA into RNA using the four ribonucleoside triphosphates as substrates. The polypeptide is DNA-directed RNA polymerase subunit Rpo5 (Sulfurisphaera tokodaii (strain DSM 16993 / JCM 10545 / NBRC 100140 / 7) (Sulfolobus tokodaii)).